Here is a 266-residue protein sequence, read N- to C-terminus: 3-methyl-2-oxobutanoate hydroxymethyltransferase (266 aa).

Residues aspartate 45 and aspartate 84 each coordinate Mg(2+). 3-methyl-2-oxobutanoate is bound by residues 45–46, aspartate 84, and lysine 112; that span reads DS. Glutamate 114 provides a ligand contact to Mg(2+). Glutamate 181 functions as the Proton acceptor in the catalytic mechanism.

This sequence belongs to the PanB family. Homodecamer; pentamer of dimers. Mg(2+) is required as a cofactor.

The protein resides in the cytoplasm. The catalysed reaction is 3-methyl-2-oxobutanoate + (6R)-5,10-methylene-5,6,7,8-tetrahydrofolate + H2O = 2-dehydropantoate + (6S)-5,6,7,8-tetrahydrofolate. Its pathway is cofactor biosynthesis; (R)-pantothenate biosynthesis; (R)-pantoate from 3-methyl-2-oxobutanoate: step 1/2. Catalyzes the reversible reaction in which hydroxymethyl group from 5,10-methylenetetrahydrofolate is transferred onto alpha-ketoisovalerate to form ketopantoate. This is 3-methyl-2-oxobutanoate hydroxymethyltransferase from Pseudomonas syringae pv. syringae (strain B728a).